The sequence spans 127 residues: Large ribosomal subunit protein bL12 (127 aa).

Belongs to the bacterial ribosomal protein bL12 family. Homodimer. Part of the ribosomal stalk of the 50S ribosomal subunit. Forms a multimeric L10(L12)X complex, where L10 forms an elongated spine to which 2 to 4 L12 dimers bind in a sequential fashion. Binds GTP-bound translation factors.

Forms part of the ribosomal stalk which helps the ribosome interact with GTP-bound translation factors. Is thus essential for accurate translation. This Acidiphilium cryptum (strain JF-5) protein is Large ribosomal subunit protein bL12.